The primary structure comprises 1301 residues: DNA-directed RNA polymerase subunit beta (1301 aa).

It belongs to the RNA polymerase beta chain family. In terms of assembly, in plastids the minimal PEP RNA polymerase catalytic core is composed of four subunits: alpha, beta, beta', and beta''. When a (nuclear-encoded) sigma factor is associated with the core the holoenzyme is formed, which can initiate transcription.

The protein localises to the plastid. It is found in the chloroplast. The enzyme catalyses RNA(n) + a ribonucleoside 5'-triphosphate = RNA(n+1) + diphosphate. Functionally, DNA-dependent RNA polymerase catalyzes the transcription of DNA into RNA using the four ribonucleoside triphosphates as substrates. This Chlorella vulgaris (Green alga) protein is DNA-directed RNA polymerase subunit beta.